Reading from the N-terminus, the 135-residue chain is Large ribosomal subunit protein mL61 (135 aa).

Residues 114–129 are compositionally biased toward basic and acidic residues; sequence HHESSPENIKEAHKQD. The tract at residues 114 to 135 is disordered; the sequence is HHESSPENIKEAHKQDYSPPSN.

The protein belongs to the mitochondrion-specific ribosomal protein mL61 family. Component of the mitochondrial large ribosomal subunit (mt-LSU). Mature yeast 74S mitochondrial ribosomes consist of a small (37S) and a large (54S) subunit. The 37S small subunit contains a 15S ribosomal RNA (15S mt-rRNA) and at least 32 different proteins. The 54S large subunit contains a 21S rRNA (21S mt-rRNA) and at least 45 different proteins.

The protein localises to the mitochondrion. Component of the mitochondrial ribosome (mitoribosome), a dedicated translation machinery responsible for the synthesis of mitochondrial genome-encoded proteins, including at least some of the essential transmembrane subunits of the mitochondrial respiratory chain. The mitoribosomes are attached to the mitochondrial inner membrane and translation products are cotranslationally integrated into the membrane. mL61 is not essential in cells grown at 30 degrees Celsius but is required for mitochondrial translation in cells grown at 18 degrees Celsius. The polypeptide is Large ribosomal subunit protein mL61 (mrp49) (Schizosaccharomyces pombe (strain 972 / ATCC 24843) (Fission yeast)).